Consider the following 447-residue polypeptide: MIKIYDTMTRSLRDFVPLTENTVNMYVCGPTVYNYIHIGNARSTVAFDTIRRYFEYRGYTVNYISNFTDVDDKIIKAANEVGISTKELSDKFITAFMEDTAQLGIKPATQNPRVINYMDEIIAFVSILIDKGFAYVSEGDVYFRVTKSNNYAKLANKTLEDLEIGASGRTDAETDRKEDPLDFALWKAAKEGEISWESPWGPGRPGWHIECSVMATEILGDTIDIHGGGADLEFPHHTNEIAQSEAKTGKTFANYWMHNGFVNVDNEKMSKSLGNFVTVHDMLKTVDGQVLRFFLATQQYRKPINFTEKAIHDAEVNLKYLKNTHSLPLTEEVSQAELQAYLDAFQAAMDDDFNTANGVTVLFDMAKWINSGNYDETVKDAFEKILQVFGIVFEEETLDEDIEKLIEERQAARANKDFATADRIRDELAAQGIKLLDTKEGVRWTRD.

Cys28 is a binding site for Zn(2+). The 'HIGH' region motif lies at 30 to 40 (PTVYNYIHIGN). Positions 211, 236, and 240 each coordinate Zn(2+). The 'KMSKS' region motif lies at 268 to 272 (KMSKS). Lys271 is a binding site for ATP.

The protein belongs to the class-I aminoacyl-tRNA synthetase family. In terms of assembly, monomer. It depends on Zn(2+) as a cofactor.

It localises to the cytoplasm. The enzyme catalyses tRNA(Cys) + L-cysteine + ATP = L-cysteinyl-tRNA(Cys) + AMP + diphosphate. The polypeptide is Cysteine--tRNA ligase (Streptococcus thermophilus (strain CNRZ 1066)).